Consider the following 96-residue polypeptide: Large ribosomal subunit protein bL21 (96 aa).

Belongs to the bacterial ribosomal protein bL21 family. In terms of assembly, part of the 50S ribosomal subunit. Contacts protein L20.

In terms of biological role, this protein binds to 23S rRNA in the presence of protein L20. This chain is Large ribosomal subunit protein bL21, found in Chlorobium phaeobacteroides (strain BS1).